We begin with the raw amino-acid sequence, 159 residues long: MASFCLSRCCALRGSTAVGWSLRTIGTSRVSLAGEGERPPPMIDLEDKSLPIPIYKEKHNEPLKLQKSRLLYQSRKRGMLENGLLLSTFAAKYLESLDARQTKLYDTLINMPTNDWDIFYWATGVKPTPQEYDNEIMNMLKEHVKNANKEKRLCQPALY.

Residues 1–14 constitute a mitochondrion transit peptide; it reads MASFCLSRCCALRG.

Belongs to the SDHAF2 family. In terms of assembly, interacts with the flavoprotein subunit within the SDH catalytic dimer.

The protein resides in the mitochondrion matrix. Its function is as follows. Plays an essential role in the assembly of succinate dehydrogenase (SDH), an enzyme complex (also referred to as respiratory complex II) that is a component of both the tricarboxylic acid (TCA) cycle and the mitochondrial electron transport chain, and which couples the oxidation of succinate to fumarate with the reduction of ubiquinone (coenzyme Q) to ubiquinol. Required for flavinylation (covalent attachment of FAD) of the flavoprotein subunit of the SDH catalytic dimer. The chain is Succinate dehydrogenase assembly factor 2, mitochondrial from Culex quinquefasciatus (Southern house mosquito).